The following is a 190-amino-acid chain: Potassium-transporting ATPase KdpC subunit (190 aa).

Residues 13–33 form a helical membrane-spanning segment; it reads IGFLLLTLVCGVLYPGVVTVF.

Belongs to the KdpC family. In terms of assembly, the system is composed of three essential subunits: KdpA, KdpB and KdpC.

The protein localises to the cell membrane. Its function is as follows. Part of the high-affinity ATP-driven potassium transport (or Kdp) system, which catalyzes the hydrolysis of ATP coupled with the electrogenic transport of potassium into the cytoplasm. This subunit acts as a catalytic chaperone that increases the ATP-binding affinity of the ATP-hydrolyzing subunit KdpB by the formation of a transient KdpB/KdpC/ATP ternary complex. The protein is Potassium-transporting ATPase KdpC subunit of Listeria monocytogenes serovar 1/2a (strain ATCC BAA-679 / EGD-e).